Here is a 59-residue protein sequence, read N- to C-terminus: UPF0337 protein PP_4561 (59 aa).

Over residues 27-43 (TDNEKLRAEGKAQELKG) the composition is skewed to basic and acidic residues. Residues 27–59 (TDNEKLRAEGKAQELKGEAQQVKGNVKDAVKKP) are disordered.

The protein belongs to the UPF0337 (CsbD) family.

In Pseudomonas putida (strain ATCC 47054 / DSM 6125 / CFBP 8728 / NCIMB 11950 / KT2440), this protein is UPF0337 protein PP_4561.